Consider the following 332-residue polypeptide: HPr kinase/phosphorylase (332 aa).

Catalysis depends on residues H153 and K174. 168 to 175 (GKSGLGKS) lines the ATP pocket. Position 175 (S175) interacts with Mg(2+). D192 (proton acceptor; for phosphorylation activity. Proton donor; for dephosphorylation activity) is an active-site residue. An important for the catalytic mechanism of both phosphorylation and dephosphorylation region spans residues 217–226 (MEIRGLGVVD). Mg(2+) is bound at residue E218. The active site involves R259. Residues 280 to 285 (PIFPGK) are important for the catalytic mechanism of dephosphorylation.

The protein belongs to the HPrK/P family. In terms of assembly, homohexamer. The cofactor is Mg(2+).

The enzyme catalyses [HPr protein]-L-serine + ATP = [HPr protein]-O-phospho-L-serine + ADP + H(+). It carries out the reaction [HPr protein]-O-phospho-L-serine + phosphate + H(+) = [HPr protein]-L-serine + diphosphate. Catalyzes the ATP- as well as the pyrophosphate-dependent phosphorylation of a specific serine residue in HPr, a phosphocarrier protein of the phosphoenolpyruvate-dependent sugar phosphotransferase system (PTS). HprK/P also catalyzes the pyrophosphate-producing, inorganic phosphate-dependent dephosphorylation (phosphorolysis) of seryl-phosphorylated HPr (P-Ser-HPr). This is HPr kinase/phosphorylase from Chlorobium phaeovibrioides (strain DSM 265 / 1930) (Prosthecochloris vibrioformis (strain DSM 265)).